The chain runs to 255 residues: Aliphatic sulfonates import ATP-binding protein SsuB (255 aa).

An ABC transporter domain is found at 12–233 (LLLNAVSKHY…RLGSVRLAEL (222 aa)). 44–51 (GRSGGGKS) is an ATP binding site.

The protein belongs to the ABC transporter superfamily. Aliphatic sulfonates importer (TC 3.A.1.17.2) family. The complex is composed of two ATP-binding proteins (SsuB), two transmembrane proteins (SsuC) and a solute-binding protein (SsuA).

Its subcellular location is the cell inner membrane. The catalysed reaction is ATP + H2O + aliphatic sulfonate-[sulfonate-binding protein]Side 1 = ADP + phosphate + aliphatic sulfonateSide 2 + [sulfonate-binding protein]Side 1.. Its function is as follows. Part of the ABC transporter complex SsuABC involved in aliphatic sulfonates import. Responsible for energy coupling to the transport system. The polypeptide is Aliphatic sulfonates import ATP-binding protein SsuB (Escherichia coli O1:K1 / APEC).